Here is a 677-residue protein sequence, read N- to C-terminus: O-fucosyltransferase 27 (677 aa).

Residues 15-35 (WIGLLGLVLSAFSLLVHFLLA) traverse the membrane as a helical; Signal-anchor for type II membrane protein segment. Residue asparagine 130 is glycosylated (N-linked (GlcNAc...) asparagine). The disordered stretch occupies residues 410–437 (PPSIEVETKHDSLKSTRQRPQPLPPPPA). 2 N-linked (GlcNAc...) asparagine glycosylation sites follow: asparagine 542 and asparagine 592. The tract at residues 619 to 677 (NAEKEEDLDEEDLSSSGLFFGHKESGGNNNGNNETVNSEANNKEEGQLEDQEELEGSER) is disordered. Over residues 622–631 (KEEDLDEEDL) the composition is skewed to acidic residues. Positions 644–658 (GGNNNGNNETVNSEA) are enriched in low complexity. Asparagine 651 carries an N-linked (GlcNAc...) asparagine glycan. Residues 665–677 (QLEDQEELEGSER) show a composition bias toward acidic residues.

Belongs to the glycosyltransferase GT106 family.

The protein localises to the membrane. It participates in glycan metabolism. The chain is O-fucosyltransferase 27 from Arabidopsis thaliana (Mouse-ear cress).